A 1143-amino-acid polypeptide reads, in one-letter code: Condensin-2 complex subunit G2 (1143 aa).

Phosphoserine is present on Ser-30. One copy of the HEAT repeat lies at 460–498 (LLPALRYSLHDNSEKVRVAFVDMLLKIKAVRAAKFWKIC). Thr-805 and Thr-1119 each carry phosphothreonine.

Component of the condensin-2 complex, which contains the SMC2 and SMC4 heterodimer, and 3 non SMC subunits that probably regulate the complex: NCAPH2, NCAPD3 and NCAPG2.

The protein localises to the nucleus. Functionally, regulatory subunit of the condensin-2 complex, a complex which establishes mitotic chromosome architecture and is involved in physical rigidity of the chromatid axis. This Homo sapiens (Human) protein is Condensin-2 complex subunit G2 (NCAPG2).